Here is a 215-residue protein sequence, read N- to C-terminus: LexA repressor (215 aa).

Residues 28–48 (RAEIAAELGFSSPNAAEEHLR) constitute a DNA-binding region (H-T-H motif). Active-site for autocatalytic cleavage activity residues include Ser-133 and Lys-170.

It belongs to the peptidase S24 family. As to quaternary structure, homodimer.

The enzyme catalyses Hydrolysis of Ala-|-Gly bond in repressor LexA.. Its function is as follows. Represses a number of genes involved in the response to DNA damage (SOS response), including recA and lexA. In the presence of single-stranded DNA, RecA interacts with LexA causing an autocatalytic cleavage which disrupts the DNA-binding part of LexA, leading to derepression of the SOS regulon and eventually DNA repair. This chain is LexA repressor, found in Burkholderia thailandensis (strain ATCC 700388 / DSM 13276 / CCUG 48851 / CIP 106301 / E264).